The following is a 321-amino-acid chain: Ferredoxin--NADP reductase (321 aa).

Asp34, Gln42, Tyr47, Val87, Phe119, Asp278, and Thr319 together coordinate FAD.

The protein belongs to the ferredoxin--NADP reductase type 2 family. As to quaternary structure, homodimer. FAD is required as a cofactor.

The enzyme catalyses 2 reduced [2Fe-2S]-[ferredoxin] + NADP(+) + H(+) = 2 oxidized [2Fe-2S]-[ferredoxin] + NADPH. The protein is Ferredoxin--NADP reductase of Streptococcus pneumoniae serotype 4 (strain ATCC BAA-334 / TIGR4).